The following is a 161-amino-acid chain: MNQFGPSALINLSNFSSIKPEPASTPPQGSMANSTAVVKIPGTPGAGGRLSPENNQVLTKKKLQDLVREVDPNEQLDEDVEEMLLQIADDFIESVVTAACQLARHRKSSTLEVKDVQLHLERQWNMWIPGFGSEEIRPYKKACTTEAHKQRMALIRKTTKK.

Residues 15-55 (FSSIKPEPASTPPQGSMANSTAVVKIPGTPGAGGRLSPENN) form a disordered region. Residue lysine 19 forms a Glycyl lysine isopeptide (Lys-Gly) (interchain with G-Cter in SUMO2) linkage. Positions 26–36 (PPQGSMANSTA) are enriched in polar residues. Residue threonine 43 is modified to Phosphothreonine. At serine 51 the chain carries Phosphoserine. Phosphothreonine is present on threonine 59. Residues 59-126 (TKKKLQDLVR…QLHLERQWNM (68 aa)) enclose the Histone-fold domain.

Belongs to the TAF12 family. As to quaternary structure, component of the TFIID basal transcription factor complex, composed of TATA-box-binding protein TBP, and a number of TBP-associated factors (TAFs), including TAF1, TAF2, TAF3, TAF4, TAF5, TAF6, TAF7, TAF8, TAF9, TAF10, TAF11, TAF12 and TAF13. Component of the TATA-binding protein-free TAF complex (TFTC), the PCAF histone acetylase complex and the STAGA transcription coactivator-HAT complex. Component of the PCAF complex, at least composed of TADA2L/ADA2, TADA3L/ADA3, TAF5L/PAF65-beta, SUPT3H, TAF6L, TAF9, TAF10, TAF12 and TRRAP. Component of the STAGA transcription coactivator-HAT complex, at least composed of SUPT3H, GCN5L2, TAF5L, TAF6L, STAF65-gamma/SUPT7L, TADA3L, TAD1L, TAF10, TAF12, TRRAP and TAF9. Interacts with ATF7 (via the transactivation domain); the interaction is prevented by sumoylation of ATF7. Interacts with TBP; the interaction is direct. Interacts with TAF10; the interaction is direct. Interacts with ATF7, promoting transactivation by ATF7. In terms of assembly, does not promote the transactivation of ATF7. In terms of tissue distribution, ubiquitous.

It is found in the nucleus. In terms of biological role, the TFIID basal transcription factor complex plays a major role in the initiation of RNA polymerase II (Pol II)-dependent transcription. TFIID recognizes and binds promoters with or without a TATA box via its subunit TBP, a TATA-box-binding protein, and promotes assembly of the pre-initiation complex (PIC). The TFIID complex consists of TBP and TBP-associated factors (TAFs), including TAF1, TAF2, TAF3, TAF4, TAF5, TAF6, TAF7, TAF8, TAF9, TAF10, TAF11, TAF12 and TAF13. Component of the TATA-binding protein-free TAF complex (TFTC), the PCAF histone acetylase complex and the STAGA transcription coactivator-HAT complex. The sequence is that of Transcription initiation factor TFIID subunit 12 from Homo sapiens (Human).